We begin with the raw amino-acid sequence, 368 residues long: tRNA/tmRNA (uracil-C(5))-methyltransferase (368 aa).

S-adenosyl-L-methionine-binding residues include Gln192, Tyr220, Asn225, Glu241, and Asp301. Cys326 acts as the Nucleophile in catalysis. The Proton acceptor role is filled by Glu360.

It belongs to the class I-like SAM-binding methyltransferase superfamily. RNA M5U methyltransferase family. TrmA subfamily.

The enzyme catalyses uridine(54) in tRNA + S-adenosyl-L-methionine = 5-methyluridine(54) in tRNA + S-adenosyl-L-homocysteine + H(+). The catalysed reaction is uridine(341) in tmRNA + S-adenosyl-L-methionine = 5-methyluridine(341) in tmRNA + S-adenosyl-L-homocysteine + H(+). Dual-specificity methyltransferase that catalyzes the formation of 5-methyluridine at position 54 (m5U54) in all tRNAs, and that of position 341 (m5U341) in tmRNA (transfer-mRNA). This Actinobacillus pleuropneumoniae serotype 3 (strain JL03) protein is tRNA/tmRNA (uracil-C(5))-methyltransferase.